The primary structure comprises 408 residues: UPF0761 membrane protein NMCC_0461 (408 aa).

Helical transmembrane passes span 43–63 (LLAL…FPVF), 100–120 (LTAI…RTID), 139–159 (FLVY…GISF), 176–196 (WSGA…LWGL), 210–230 (AFVG…LFTW), and 248–268 (VPFF…GAVL).

The protein belongs to the UPF0761 family.

The protein resides in the cell inner membrane. This chain is UPF0761 membrane protein NMCC_0461, found in Neisseria meningitidis serogroup C (strain 053442).